Consider the following 80-residue polypeptide: RNA-binding protein KhpA (80 aa).

Residues 33 to 80 form the KH domain; it reads GRTVEVHVHPDDLGKVIGRGGRTATALRKLVAGIGGRGIRVDVVDTDQ.

Belongs to the KhpA RNA-binding protein family.

It localises to the cytoplasm. Its function is as follows. A probable RNA-binding protein. This is RNA-binding protein KhpA from Mycobacterium leprae (strain TN).